Here is a 295-residue protein sequence, read N- to C-terminus: Iron-sulfur cluster carrier protein (295 aa).

Residue 38–45 (GKGGVGKS) coordinates ATP.

It belongs to the Mrp/NBP35 ATP-binding proteins family. As to quaternary structure, homodimer.

Functionally, binds and transfers iron-sulfur (Fe-S) clusters to target apoproteins. Can hydrolyze ATP. In Pyrococcus furiosus (strain ATCC 43587 / DSM 3638 / JCM 8422 / Vc1), this protein is Iron-sulfur cluster carrier protein.